The following is a 45-amino-acid chain: Bomanin Short 2 (45 aa).

The first 20 residues, 1–20, serve as a signal peptide directing secretion; it reads MKFFSVVTVFVFGLLALANA. Residues 21 to 27 constitute a propeptide, removed by a dipeptidylpeptidase; it reads VPLSPDP. Cys36 and Cys39 form a disulfide bridge. Residue Gly43 is modified to Glycine amide.

In terms of tissue distribution, hemolymph (at protein level).

The protein resides in the secreted. Its function is as follows. Secreted immune-induced peptide induced by Toll signaling. Has a role in resistance to bacterial and fungal infections. This Drosophila melanogaster (Fruit fly) protein is Bomanin Short 2.